Consider the following 549-residue polypeptide: YTH domain-containing family protein 1 (549 aa).

5 disordered regions span residues 29–102 (QAPW…QPNM), 139–165 (GHPP…RQSG), 243–262 (GASG…QQAV), 273–298 (DSTE…AKGP), and 425–458 (REDS…SENK). The span at 49–61 (VVGQTQSSPQYNG) shows a compositional bias: polar residues. Over residues 71-102 (QGYYMPQQQQQQQQMPQYYGGPMSPSQPQPNM) the composition is skewed to low complexity. Composition is skewed to polar residues over residues 251-260 (TGPSATTPQQ) and 273-289 (DSTE…TPTA). Residues 307–513 (DRFFVLKSLT…SVGRRLIGLF (207 aa)) form the YTH domain.

The protein belongs to the YTHDF family. YTHDF1 subfamily.

Its function is as follows. Specifically recognizes and binds N6-methyladenosine (m6A)-containing mRNAs, and regulates their stability. M6A is a modification present at internal sites of mRNAs and some non-coding RNAs and plays a role in mRNA stability and processing. Directly interacts with the acid phosphatase APHA mRNA to increase its stability. This chain is YTH domain-containing family protein 1, found in Cryphonectria parasitica (strain ATCC 38755 / EP155).